Consider the following 1393-residue polypeptide: RNA polymerase II-associated protein 1 (1393 aa).

Disordered regions lie at residues 34–53, 61–94, and 266–295; these read KKGN…LQDH, NLPD…PEER, and SHTQ…EEPL. Positions 64 to 74 are enriched in pro residues; that stretch reads DLPPALVPSPP. Ser72 is modified (phosphoserine). Thr321 bears the Phosphothreonine mark. The interval 496–531 is disordered; that stretch reads PSQEDKEDEDEDEECPAGKAKRKSPEEESRPPPDLA. Residues 500-510 show a composition bias toward acidic residues; that stretch reads DKEDEDEDEEC. The span at 518–531 shows a compositional bias: basic and acidic residues; it reads KSPEEESRPPPDLA. A Phosphoserine modification is found at Ser1121.

The protein belongs to the RPAP1 family. As to quaternary structure, part of an RNA polymerase II complex that contains POLR2A, POLR2B, POLR2C, POLR2D, POLR2E, POLR2F, POLR2G, POLR2H, POLR2I, POLR2J, POLR2K, POLR2L, RPAP1, FCP1 plus the general transcription factors TFIIB and TFIIF.

It is found in the nucleus. In terms of biological role, forms an interface between the RNA polymerase II enzyme and chaperone/scaffolding protein, suggesting that it is required to connect RNA polymerase II to regulators of protein complex formation. Required for interaction of the RNA polymerase II complex with acetylated histone H3. This Homo sapiens (Human) protein is RNA polymerase II-associated protein 1 (RPAP1).